We begin with the raw amino-acid sequence, 245 residues long: Ubiquinone/menaquinone biosynthesis C-methyltransferase UbiE (245 aa).

Residues Thr71, Asp92, and 118–119 contribute to the S-adenosyl-L-methionine site; that span reads DA.

It belongs to the class I-like SAM-binding methyltransferase superfamily. MenG/UbiE family.

The enzyme catalyses a 2-demethylmenaquinol + S-adenosyl-L-methionine = a menaquinol + S-adenosyl-L-homocysteine + H(+). The catalysed reaction is a 2-methoxy-6-(all-trans-polyprenyl)benzene-1,4-diol + S-adenosyl-L-methionine = a 5-methoxy-2-methyl-3-(all-trans-polyprenyl)benzene-1,4-diol + S-adenosyl-L-homocysteine + H(+). It functions in the pathway quinol/quinone metabolism; menaquinone biosynthesis; menaquinol from 1,4-dihydroxy-2-naphthoate: step 2/2. Its pathway is cofactor biosynthesis; ubiquinone biosynthesis. In terms of biological role, methyltransferase required for the conversion of demethylmenaquinol (DMKH2) to menaquinol (MKH2) and the conversion of 2-polyprenyl-6-methoxy-1,4-benzoquinol (DDMQH2) to 2-polyprenyl-3-methyl-6-methoxy-1,4-benzoquinol (DMQH2). In Neisseria gonorrhoeae (strain ATCC 700825 / FA 1090), this protein is Ubiquinone/menaquinone biosynthesis C-methyltransferase UbiE.